The following is a 382-amino-acid chain: Galactokinase (382 aa).

34–37 (EHTD) provides a ligand contact to substrate. Position 124–130 (124–130 (GAGLSSS)) interacts with ATP. Mg(2+) is bound by residues S130 and E162. The active-site Proton acceptor is D174. A substrate-binding site is contributed by Y223.

This sequence belongs to the GHMP kinase family. GalK subfamily.

Its subcellular location is the cytoplasm. It catalyses the reaction alpha-D-galactose + ATP = alpha-D-galactose 1-phosphate + ADP + H(+). Its pathway is carbohydrate metabolism; galactose metabolism. In terms of biological role, catalyzes the transfer of the gamma-phosphate of ATP to D-galactose to form alpha-D-galactose-1-phosphate (Gal-1-P). This is Galactokinase from Shigella boydii serotype 4 (strain Sb227).